Here is a 465-residue protein sequence, read N- to C-terminus: Ribosomal protein uS12 methylthiotransferase RimO (465 aa).

Positions 1-117 (MKVGFISLGC…IVDICEGMPP (117 aa)) constitute an MTTase N-terminal domain. [4Fe-4S] cluster-binding residues include C10, C46, C80, C150, C154, and C157. Positions 136 to 369 (ATPRHFAYMK…AIQRKIARAR (234 aa)) constitute a Radical SAM core domain. One can recognise a TRAM domain in the interval 371–442 (RGLVGKEVPV…DYDVVGTLLA (72 aa)).

This sequence belongs to the methylthiotransferase family. RimO subfamily. [4Fe-4S] cluster serves as cofactor.

It localises to the cytoplasm. It carries out the reaction L-aspartate(89)-[ribosomal protein uS12]-hydrogen + (sulfur carrier)-SH + AH2 + 2 S-adenosyl-L-methionine = 3-methylsulfanyl-L-aspartate(89)-[ribosomal protein uS12]-hydrogen + (sulfur carrier)-H + 5'-deoxyadenosine + L-methionine + A + S-adenosyl-L-homocysteine + 2 H(+). Catalyzes the methylthiolation of an aspartic acid residue of ribosomal protein uS12. In Solibacter usitatus (strain Ellin6076), this protein is Ribosomal protein uS12 methylthiotransferase RimO.